A 530-amino-acid chain; its full sequence is Probable glycerol-3-phosphate acyltransferase 2 (530 aa).

The next 3 helical transmembrane spans lie at 70–90 (YFMV…LLVL), 93–113 (FISL…SFFG), and 275–295 (LVLF…LVFG). An HXXXXD motif motif is present at residues 339–344 (HRTLLD).

This sequence belongs to the GPAT/DAPAT family. In terms of tissue distribution, weakly or not expressed in roots, leaves, seedlings, developing siliques and flower buds.

It is found in the membrane. The catalysed reaction is sn-glycerol 3-phosphate + an acyl-CoA = a 1-acyl-sn-glycero-3-phosphate + CoA. It functions in the pathway phospholipid metabolism; CDP-diacylglycerol biosynthesis; CDP-diacylglycerol from sn-glycerol 3-phosphate: step 1/3. Its function is as follows. Esterifies acyl-group from acyl-ACP to the sn-1 position of glycerol-3-phosphate, an essential step in glycerolipid biosynthesis. This is Probable glycerol-3-phosphate acyltransferase 2 (GPAT2) from Arabidopsis thaliana (Mouse-ear cress).